We begin with the raw amino-acid sequence, 577 residues long: Arginine--tRNA ligase (577 aa).

The 'HIGH' region signature appears at 122–132 (PNVAKEMHVGH).

It belongs to the class-I aminoacyl-tRNA synthetase family. Monomer.

Its subcellular location is the cytoplasm. The enzyme catalyses tRNA(Arg) + L-arginine + ATP = L-arginyl-tRNA(Arg) + AMP + diphosphate. The sequence is that of Arginine--tRNA ligase from Escherichia coli (strain K12 / MC4100 / BW2952).